The primary structure comprises 328 residues: UPF0194 membrane protein YPTS_1292 (328 aa).

A signal peptide spans 1–22 (MNRKKIIVAAVIVALLATLAYG). Coiled coils occupy residues 80–109 (YLNALKQAQANVQSAQAQLALLKAGYREEE) and 142–209 (AVSA…ILLA).

This sequence belongs to the UPF0194 family.

It localises to the periplasm. This is UPF0194 membrane protein YPTS_1292 from Yersinia pseudotuberculosis serotype IB (strain PB1/+).